The following is a 752-amino-acid chain: Protein GCN20 (752 aa).

Ala2 carries the N-acetylalanine modification. 2 consecutive ABC transporter domains span residues 199-464 (IHID…RKNA) and 532-748 (IQLQ…AAGV). Residues 232 to 239 (GQNGIGKS) and 565 to 572 (GANGCGKT) each bind ATP.

It belongs to the ABC transporter superfamily. ABCF family. EF3 subfamily. In terms of assembly, interacts (via N-terminus) with GCN1 (via C-terminus); this interaction stimulates GCN2 kinase activity in response to amino acid starvation. The GCN1-GCN20 complex interacts with GCN2 on translating ribosomes in amino acid-starved cells; this association stimulates GCN2 kinase activation by uncharged tRNAs, and hence allowing GCN4 translational activation and derepression of amino acid biosynthetic genes. Associates with ribosomes.

Functionally, acts as a positive activator of the GCN2 protein kinase activity in response to in response to low amino acid, carbon, or purine availability. Component of the GCN1-GCN20 complex that forms a complex with GCN2 on translating ribosomes; during this process, GCN20 helps GCN1 to act as a chaperone to facilitate delivery of uncharged tRNAs that enter the A site of ribosomes to the tRNA-binding domain of GCN2, and hence stimulating GCN2 kinase activity. Participates in gene-specific mRNA translation activation, such as the transcriptional activator GCN4, by promoting the GCN2-mediated phosphorylation of eukaryotic translation initiation factor 2 (eIF-2-alpha/SUI2) on 'Ser-52', and hence allowing GCN4-mediated reprogramming of amino acid biosynthetic gene expression to alleviate nutrient depletion. In Saccharomyces cerevisiae (strain ATCC 204508 / S288c) (Baker's yeast), this protein is Protein GCN20.